The primary structure comprises 191 residues: Large ribosomal subunit protein uL6 (191 aa).

It belongs to the universal ribosomal protein uL6 family. As to quaternary structure, part of the 50S ribosomal subunit.

In terms of biological role, this protein binds to the 23S rRNA, and is important in its secondary structure. It is located near the subunit interface in the base of the L7/L12 stalk, and near the tRNA binding site of the peptidyltransferase center. The protein is Large ribosomal subunit protein uL6 of Cyanothece sp. (strain PCC 7425 / ATCC 29141).